Here is a 456-residue protein sequence, read N- to C-terminus: 3-isopropylmalate dehydratase large subunit (456 aa).

3 residues coordinate [4Fe-4S] cluster: C336, C396, and C399.

This sequence belongs to the aconitase/IPM isomerase family. LeuC type 1 subfamily. As to quaternary structure, heterodimer of LeuC and LeuD. It depends on [4Fe-4S] cluster as a cofactor.

The enzyme catalyses (2R,3S)-3-isopropylmalate = (2S)-2-isopropylmalate. Its pathway is amino-acid biosynthesis; L-leucine biosynthesis; L-leucine from 3-methyl-2-oxobutanoate: step 2/4. In terms of biological role, catalyzes the isomerization between 2-isopropylmalate and 3-isopropylmalate, via the formation of 2-isopropylmaleate. The protein is 3-isopropylmalate dehydratase large subunit of Staphylococcus saprophyticus subsp. saprophyticus (strain ATCC 15305 / DSM 20229 / NCIMB 8711 / NCTC 7292 / S-41).